The following is a 177-amino-acid chain: Large ribosomal subunit protein uL6 (177 aa).

The protein belongs to the universal ribosomal protein uL6 family. In terms of assembly, part of the 50S ribosomal subunit.

In terms of biological role, this protein binds to the 23S rRNA, and is important in its secondary structure. It is located near the subunit interface in the base of the L7/L12 stalk, and near the tRNA binding site of the peptidyltransferase center. In Ectopseudomonas mendocina (strain ymp) (Pseudomonas mendocina), this protein is Large ribosomal subunit protein uL6.